Consider the following 209-residue polypeptide: Uracil phosphoribosyltransferase (209 aa).

Residues Arg79, Arg104, and 131–139 (DPMLATGNS) each bind 5-phospho-alpha-D-ribose 1-diphosphate. Uracil is bound by residues Ile194 and 199 to 201 (GDA). Residue Asp200 participates in 5-phospho-alpha-D-ribose 1-diphosphate binding.

The protein belongs to the UPRTase family. It depends on Mg(2+) as a cofactor.

It catalyses the reaction UMP + diphosphate = 5-phospho-alpha-D-ribose 1-diphosphate + uracil. Its pathway is pyrimidine metabolism; UMP biosynthesis via salvage pathway; UMP from uracil: step 1/1. With respect to regulation, allosterically activated by GTP. In terms of biological role, catalyzes the conversion of uracil and 5-phospho-alpha-D-ribose 1-diphosphate (PRPP) to UMP and diphosphate. The chain is Uracil phosphoribosyltransferase from Rhizobium meliloti (strain 1021) (Ensifer meliloti).